The chain runs to 226 residues: MKRGKKYRAAVARYDRAERFSLDRAVGLLKEVRYASFDETVEVHVSLRLKKNQTVRDTVVLPHRFRAEVRVLVFCKEDRVSEALAAGAAYAGGAEYLEKVKGGWFDFDVVVASPDMMKDVGRLGMVLGRRGLMPNPRTGTVSADLGAAVCELKKGRVEFRADKTGVVHLAVGKTTMDSAQIVENVDVFLSEMDRKKPVDVKAGFVRSISLSSSMGPGIWVVHKSEE.

The protein belongs to the universal ribosomal protein uL1 family. As to quaternary structure, part of the 50S ribosomal subunit.

Functionally, binds directly to 23S rRNA. The L1 stalk is quite mobile in the ribosome, and is involved in E site tRNA release. Protein L1 is also a translational repressor protein, it controls the translation of the L11 operon by binding to its mRNA. The chain is Large ribosomal subunit protein uL1 from Treponema pallidum (strain Nichols).